We begin with the raw amino-acid sequence, 344 residues long: Anthranilate phosphoribosyltransferase (344 aa).

Residues Gly85, 88 to 89 (GD), Thr93, 95 to 98 (NIST), 113 to 121 (KHGNRSVSS), and Ser125 each bind 5-phospho-alpha-D-ribose 1-diphosphate. Position 85 (Gly85) interacts with anthranilate. Ser97 is a Mg(2+) binding site. Asn116 serves as a coordination point for anthranilate. Arg171 provides a ligand contact to anthranilate. Mg(2+) is bound by residues Asp229 and Glu230.

It belongs to the anthranilate phosphoribosyltransferase family. As to quaternary structure, homodimer. Mg(2+) serves as cofactor.

The catalysed reaction is N-(5-phospho-beta-D-ribosyl)anthranilate + diphosphate = 5-phospho-alpha-D-ribose 1-diphosphate + anthranilate. It functions in the pathway amino-acid biosynthesis; L-tryptophan biosynthesis; L-tryptophan from chorismate: step 2/5. In terms of biological role, catalyzes the transfer of the phosphoribosyl group of 5-phosphorylribose-1-pyrophosphate (PRPP) to anthranilate to yield N-(5'-phosphoribosyl)-anthranilate (PRA). This Shewanella amazonensis (strain ATCC BAA-1098 / SB2B) protein is Anthranilate phosphoribosyltransferase.